We begin with the raw amino-acid sequence, 573 residues long: Phosphoenolpyruvate-protein phosphotransferase (573 aa).

The Tele-phosphohistidine intermediate role is filled by H190. Positions 297 and 333 each coordinate phosphoenolpyruvate. Mg(2+) contacts are provided by E432 and D456. Residues N455 to D456 and R466 contribute to the phosphoenolpyruvate site. C503 serves as the catalytic Proton donor.

Belongs to the PEP-utilizing enzyme family. Homodimer. It depends on Mg(2+) as a cofactor.

It is found in the cytoplasm. The catalysed reaction is L-histidyl-[protein] + phosphoenolpyruvate = N(pros)-phospho-L-histidyl-[protein] + pyruvate. General (non sugar-specific) component of the phosphoenolpyruvate-dependent sugar phosphotransferase system (sugar PTS). This major carbohydrate active-transport system catalyzes the phosphorylation of incoming sugar substrates concomitantly with their translocation across the cell membrane. Enzyme I transfers the phosphoryl group from phosphoenolpyruvate (PEP) to the phosphoryl carrier protein (HPr). The polypeptide is Phosphoenolpyruvate-protein phosphotransferase (ptsI) (Priestia megaterium (Bacillus megaterium)).